Here is a 308-residue protein sequence, read N- to C-terminus: Aspartate carbamoyltransferase catalytic subunit (308 aa).

R59 and T60 together coordinate carbamoyl phosphate. Residue K87 participates in L-aspartate binding. R109, H139, and Q142 together coordinate carbamoyl phosphate. Residues R172 and R224 each contribute to the L-aspartate site. Residues A265 and P266 each contribute to the carbamoyl phosphate site.

This sequence belongs to the aspartate/ornithine carbamoyltransferase superfamily. ATCase family. In terms of assembly, heterododecamer (2C3:3R2) of six catalytic PyrB chains organized as two trimers (C3), and six regulatory PyrI chains organized as three dimers (R2).

The enzyme catalyses carbamoyl phosphate + L-aspartate = N-carbamoyl-L-aspartate + phosphate + H(+). Its pathway is pyrimidine metabolism; UMP biosynthesis via de novo pathway; (S)-dihydroorotate from bicarbonate: step 2/3. In terms of biological role, catalyzes the condensation of carbamoyl phosphate and aspartate to form carbamoyl aspartate and inorganic phosphate, the committed step in the de novo pyrimidine nucleotide biosynthesis pathway. The sequence is that of Aspartate carbamoyltransferase catalytic subunit from Streptococcus thermophilus (strain ATCC BAA-491 / LMD-9).